We begin with the raw amino-acid sequence, 429 residues long: C4-dicarboxylate transport protein (429 aa).

The next 8 membrane-spanning stretches (helical) occupy residues 3-23 (VSIF…GVLL), 44-64 (LIKM…IAGM), 76-96 (IALL…LVVV), 144-164 (AFAS…GFAL), 184-204 (VIFG…FGAM), 222-242 (LILC…GTIA), 331-351 (TLLV…GSGF), and 352-372 (IVLA…LALI).

This sequence belongs to the dicarboxylate/amino acid:cation symporter (DAACS) (TC 2.A.23) family.

Its subcellular location is the cell inner membrane. Functionally, responsible for the transport of dicarboxylates such as succinate, fumarate, and malate from the periplasm across the membrane. The polypeptide is C4-dicarboxylate transport protein (Yersinia pestis bv. Antiqua (strain Antiqua)).